A 428-amino-acid polypeptide reads, in one-letter code: Enolase (428 aa).

Q163 lines the (2R)-2-phosphoglycerate pocket. The active-site Proton donor is the E205. Mg(2+) contacts are provided by D242, E286, and D313. 4 residues coordinate (2R)-2-phosphoglycerate: K338, R367, S368, and K389. Residue K338 is the Proton acceptor of the active site.

Belongs to the enolase family. Mg(2+) serves as cofactor.

It is found in the cytoplasm. The protein localises to the secreted. It localises to the cell surface. The enzyme catalyses (2R)-2-phosphoglycerate = phosphoenolpyruvate + H2O. The protein operates within carbohydrate degradation; glycolysis; pyruvate from D-glyceraldehyde 3-phosphate: step 4/5. Its function is as follows. Catalyzes the reversible conversion of 2-phosphoglycerate (2-PG) into phosphoenolpyruvate (PEP). It is essential for the degradation of carbohydrates via glycolysis. This Lactobacillus helveticus (strain DPC 4571) protein is Enolase.